A 1113-amino-acid chain; its full sequence is Potassium channel subfamily U member 1 (1113 aa).

Residues 1-24 (MSQTLLDNLNKKELTETSCTIEIQ) are Extracellular-facing. A helical transmembrane segment spans residues 25 to 45 (AAFILSSLATFFGGLIVLFIF). Over 46-101 (RIALKISRNWKTVKGPRGILELFSSRRIEVNPLRKLYFHGVFRERIEMLLSAQTIV) the chain is Cytoplasmic. A helical transmembrane segment spans residues 102–122 (GQVLVILVFVLSIGSLVIYFI). Over 123 to 137 (NSMDPVRKCSSYEDK) the chain is Extracellular. The helical transmembrane segment at 138–158 (IVHVDLSFNAFFSFYFGLRFW) threads the bilayer. Residues 159–165 (AAEDKIK) lie on the Cytoplasmic side of the membrane. Residues 166–186 (FWLEMNSIVDIFTIPPTFISY) traverse the membrane as a helical segment. At 187 to 188 (YL) the chain is on the extracellular side. The helical; Voltage-sensor transmembrane segment at 189–209 (KSNWLGLRFLRALRLLELPKI) threads the bilayer. The Cytoplasmic segment spans residues 210–226 (LQILQVIKTSNSVKLSK). The chain crosses the membrane as a helical span at residues 227–247 (LMSIVISTWFTAAGFLHLVEN). The Extracellular portion of the chain corresponds to 248–259 (SGDPWLNGRNSQ). An intramembrane region (pore-forming) is located at residues 260–282 (TMSYFESIYLVTATMSTVGFGDV). The Extracellular segment spans residues 283–290 (VAKTSLGR). The helical transmembrane segment at 291-311 (IFIVFFTLGSLILFANYIPEM) threads the bilayer. The Cytoplasmic portion of the chain corresponds to 312 to 1113 (VELFSTRKKY…FDASDIDPGK (802 aa)). RCK N-terminal domains are found at residues 331–473 (KKFI…DNII) and 710–881 (QNHI…DEAI). A compositionally biased stretch (polar residues) spans 1047–1081 (ASIQDQDTTTNVTSMSQGSNFQGAQSALNEHSLSP). Residues 1047–1091 (ASIQDQDTTTNVTSMSQGSNFQGAQSALNEHSLSPASAMGEKKSP) form a disordered region.

This sequence belongs to the potassium channel family. Calcium-activated (TC 1.A.1.3) subfamily. KCa1.1/KCNMA1 sub-subfamily. Homotetramer; which constitutes the activated potassium channel. Interacts with LRRC52; this interaction changes channel gating properties, such as shifting gating to more negative potentials at a given pH.

Its subcellular location is the cell membrane. It is found in the cell projection. It localises to the cilium. The protein localises to the flagellum membrane. The catalysed reaction is K(+)(in) = K(+)(out). With respect to regulation, regulated by changes in cytosolic pH; activated by alkalization. Not activated by intracellular Ca(2+). VU0546110 acts as a selective inhibitor. The auxiliary subunit LRRC52 shifts the activation of KCNU1 to more negative potentials at a given pH. In terms of biological role, testis-specific potassium channel activated by both intracellular pH and membrane voltage that mediates export of K(+). Represents the primary spermatozoan K(+) current. The channel underlies a pH-triggered membrane hyperpolarization during the process of sperm capacitation, as sperm encounter the alkaline environment near the ovum in the female reproductive tract, thereby playing an essential for male fertility. The chain is Potassium channel subfamily U member 1 (Kcnu1) from Rattus norvegicus (Rat).